A 166-amino-acid chain; its full sequence is Regulatory protein RecX (166 aa).

This sequence belongs to the RecX family.

The protein resides in the cytoplasm. Functionally, modulates RecA activity. The protein is Regulatory protein RecX of Salmonella agona (strain SL483).